A 576-amino-acid polypeptide reads, in one-letter code: MFYSRYFIPTIKETPSDAEVVSHQLMLRAGMIRKLAAGIYNYLPLGLRSIRKFEAIVREEMNRAGAIEMLMPSVQPAELWEESGRWSFYGKELLRFRDRKDGEFCMGPTHEEVITDMVRREIKSYRQMPVNFYQIQTKFRDEIRPRFGLMRGREFIMKDAYSFDVDSAAADGSYELMFQAYMRIFERCGLNFRAVEADTGTIGGSSSHEFMVLADSGEDAIVSCDSCRYAANVEKAESRPAAGASTEEQLELTKTATPDMKSIADVAAFLGLATDRTIKALVYSSTTGEHVMAILRGDHELNEIKLKNCLGWDEIQMATDEEILAYTGSPVGFLGPMGLKQGVVVVADLALRGMANAVIGANEKDMHYINANLGRDFTSDRFVDLRNVEAGDPCPRCEGGKLEMWRGIEVGHVFKLGTKYSQALGATYLDADGKEQVIFMGCYGIGIGRTVAAAIEQNHDDNGIIFPLPLAPFHCSVVALNTKDKGVMAAAEEMYFRLEQQGIEVLFDDRDERPGVKFKDNDLIGIPLRIVVGSKGLSEGKVEVKIRASGEMLLLSPDEAVETIVRMVRDAVTSAQ.

It belongs to the class-II aminoacyl-tRNA synthetase family. ProS type 1 subfamily. In terms of assembly, homodimer.

The protein resides in the cytoplasm. It carries out the reaction tRNA(Pro) + L-proline + ATP = L-prolyl-tRNA(Pro) + AMP + diphosphate. Functionally, catalyzes the attachment of proline to tRNA(Pro) in a two-step reaction: proline is first activated by ATP to form Pro-AMP and then transferred to the acceptor end of tRNA(Pro). As ProRS can inadvertently accommodate and process non-cognate amino acids such as alanine and cysteine, to avoid such errors it has two additional distinct editing activities against alanine. One activity is designated as 'pretransfer' editing and involves the tRNA(Pro)-independent hydrolysis of activated Ala-AMP. The other activity is designated 'posttransfer' editing and involves deacylation of mischarged Ala-tRNA(Pro). The misacylated Cys-tRNA(Pro) is not edited by ProRS. This Pelobacter propionicus (strain DSM 2379 / NBRC 103807 / OttBd1) protein is Proline--tRNA ligase.